A 540-amino-acid chain; its full sequence is ATP-dependent RNA helicase DBP3 (540 aa).

A compositionally biased stretch (basic and acidic residues) spans 1–35; that stretch reads MTVEESKKRKLTDDVAIKQNEKKIKKDKKVKDKKD. The segment at 1–89 is disordered; it reads MTVEESKKRK…TTEQPSKQVK (89 aa). Positions 36–52 are enriched in basic residues; the sequence is KKDKKDKKDKKEKKEKK. Composition is skewed to basic and acidic residues over residues 53–62 and 68–79; these read EKKEKNDKKD and DKKAEQVDKLSE. Residues 130–156 carry the Q motif motif; it reads LAFNQISLDKEVQNEIAKFPKPTPIQA. Residues 159 to 332 form the Helicase ATP-binding domain; that stretch reads WPYLLSGKDV…STFMKEPVKV (174 aa). 172 to 179 contributes to the ATP binding site; it reads AETGSGKT. Positions 279–282 match the DEAD box motif; it reads DEAD. The Helicase C-terminal domain maps to 361–510; sequence KLLDLLKKYQ…PVPEDLIKFG (150 aa).

Belongs to the DEAD box helicase family. DDX5/DBP2 subfamily.

Its subcellular location is the nucleus. It localises to the nucleolus. It carries out the reaction ATP + H2O = ADP + phosphate + H(+). Its function is as follows. ATP-dependent RNA helicase required for 60S ribosomal subunit synthesis. Involved in efficient pre-rRNA processing, predominantly at site A3, which is necessary for the normal formation of 25S and 5.8S rRNAs. The chain is ATP-dependent RNA helicase DBP3 (DBP3) from Candida glabrata (strain ATCC 2001 / BCRC 20586 / JCM 3761 / NBRC 0622 / NRRL Y-65 / CBS 138) (Yeast).